The following is a 426-amino-acid chain: Enolase (426 aa).

Q165 is a (2R)-2-phosphoglycerate binding site. E209 functions as the Proton donor in the catalytic mechanism. Mg(2+) contacts are provided by D244, E287, and D313. K338, R367, S368, and K389 together coordinate (2R)-2-phosphoglycerate. The active-site Proton acceptor is K338.

The protein belongs to the enolase family. Mg(2+) serves as cofactor.

The protein resides in the cytoplasm. It is found in the secreted. The protein localises to the cell surface. The catalysed reaction is (2R)-2-phosphoglycerate = phosphoenolpyruvate + H2O. The protein operates within carbohydrate degradation; glycolysis; pyruvate from D-glyceraldehyde 3-phosphate: step 4/5. Catalyzes the reversible conversion of 2-phosphoglycerate (2-PG) into phosphoenolpyruvate (PEP). It is essential for the degradation of carbohydrates via glycolysis. The chain is Enolase from Methanococcus vannielii (strain ATCC 35089 / DSM 1224 / JCM 13029 / OCM 148 / SB).